The primary structure comprises 100 residues: Large ribosomal subunit protein uL23 (100 aa).

This sequence belongs to the universal ribosomal protein uL23 family. In terms of assembly, part of the 50S ribosomal subunit. Contacts protein L29, and trigger factor when it is bound to the ribosome.

Its function is as follows. One of the early assembly proteins it binds 23S rRNA. One of the proteins that surrounds the polypeptide exit tunnel on the outside of the ribosome. Forms the main docking site for trigger factor binding to the ribosome. The sequence is that of Large ribosomal subunit protein uL23 from Novosphingobium aromaticivorans (strain ATCC 700278 / DSM 12444 / CCUG 56034 / CIP 105152 / NBRC 16084 / F199).